A 321-amino-acid chain; its full sequence is GTP cyclohydrolase FolE2 (321 aa).

The protein belongs to the GTP cyclohydrolase IV family.

It catalyses the reaction GTP + H2O = 7,8-dihydroneopterin 3'-triphosphate + formate + H(+). It functions in the pathway cofactor biosynthesis; 7,8-dihydroneopterin triphosphate biosynthesis; 7,8-dihydroneopterin triphosphate from GTP: step 1/1. Functionally, converts GTP to 7,8-dihydroneopterin triphosphate. The chain is GTP cyclohydrolase FolE2 from Paracoccus denitrificans (strain Pd 1222).